The chain runs to 552 residues: Cytochrome P450 97B1, chloroplastic (552 aa).

Residues 1-52 (MVAAPISTVKLTDANLHTRFHSSSSSTPSTLSLPLSLHFHFSSHSKRFSSIR) constitute a chloroplast transit peptide. Residue Cys528 coordinates heme.

It belongs to the cytochrome P450 family. Heme is required as a cofactor.

The protein localises to the plastid. The protein resides in the chloroplast membrane. This is Cytochrome P450 97B1, chloroplastic (CYP97B1) from Pisum sativum (Garden pea).